The primary structure comprises 189 residues: Dual specificity phosphatase 29 (189 aa).

Positions 33–182 constitute a Tyrosine-protein phosphatase domain; that stretch reads HVNEVWPGVY…LRELDTHLQE (150 aa). Substrate is bound at residue 126–133; that stretch reads HCVMGRSR. Cysteine 127 serves as the catalytic Phosphocysteine intermediate.

Belongs to the protein-tyrosine phosphatase family. Non-receptor class dual specificity subfamily.

It is found in the cytoplasm. The protein localises to the nucleus. It catalyses the reaction O-phospho-L-tyrosyl-[protein] + H2O = L-tyrosyl-[protein] + phosphate. It carries out the reaction O-phospho-L-seryl-[protein] + H2O = L-seryl-[protein] + phosphate. The enzyme catalyses O-phospho-L-threonyl-[protein] + H2O = L-threonyl-[protein] + phosphate. Dual specificity phosphatase able to dephosphorylate phosphotyrosine, phosphoserine and phosphothreonine residues within the same substrate, with a preference for phosphotyrosine as a substrate. Involved in the modulation of AMPK and MAPK1/2 signaling pathways. This Danio rerio (Zebrafish) protein is Dual specificity phosphatase 29 (dusp29).